The primary structure comprises 74 residues: Large ribosomal subunit protein bL31 (74 aa).

This sequence belongs to the bacterial ribosomal protein bL31 family. Type A subfamily. Part of the 50S ribosomal subunit.

Its function is as follows. Binds the 23S rRNA. The sequence is that of Large ribosomal subunit protein bL31 from Xanthobacter autotrophicus (strain ATCC BAA-1158 / Py2).